A 371-amino-acid chain; its full sequence is Probable inactive methyltransferase Os04g0175900 (371 aa).

Residue Leu-137–Asn-143 participates in substrate binding. The interval Leu-170–Met-188 is substrate binding. Residues Gly-216, Asp-239, Met-260, and Lys-273 each coordinate S-adenosyl-L-methionine.

It belongs to the class I-like SAM-binding methyltransferase superfamily. Cation-independent O-methyltransferase family. COMT subfamily.

In Oryza sativa subsp. japonica (Rice), this protein is Probable inactive methyltransferase Os04g0175900.